The chain runs to 158 residues: 2-C-methyl-D-erythritol 2,4-cyclodiphosphate synthase (158 aa).

Residues D9 and H11 each contribute to the a divalent metal cation site. 4-CDP-2-C-methyl-D-erythritol 2-phosphate is bound by residues 9-11 and 35-36; these read DVH and HS. H43 lines the a divalent metal cation pocket. 4-CDP-2-C-methyl-D-erythritol 2-phosphate contacts are provided by residues 57–59, 62–66, 133–136, F140, and R143; these read DIG, FPDTD, and TTTE.

The protein belongs to the IspF family. Homotrimer. The cofactor is a divalent metal cation.

It catalyses the reaction 4-CDP-2-C-methyl-D-erythritol 2-phosphate = 2-C-methyl-D-erythritol 2,4-cyclic diphosphate + CMP. It participates in isoprenoid biosynthesis; isopentenyl diphosphate biosynthesis via DXP pathway; isopentenyl diphosphate from 1-deoxy-D-xylulose 5-phosphate: step 4/6. Involved in the biosynthesis of isopentenyl diphosphate (IPP) and dimethylallyl diphosphate (DMAPP), two major building blocks of isoprenoid compounds. Catalyzes the conversion of 4-diphosphocytidyl-2-C-methyl-D-erythritol 2-phosphate (CDP-ME2P) to 2-C-methyl-D-erythritol 2,4-cyclodiphosphate (ME-CPP) with a corresponding release of cytidine 5-monophosphate (CMP). The protein is 2-C-methyl-D-erythritol 2,4-cyclodiphosphate synthase of Actinobacillus succinogenes (strain ATCC 55618 / DSM 22257 / CCUG 43843 / 130Z).